Reading from the N-terminus, the 133-residue chain is Large ribosomal subunit protein uL22 (133 aa).

Belongs to the universal ribosomal protein uL22 family. Part of the 50S ribosomal subunit.

This protein binds specifically to 23S rRNA; its binding is stimulated by other ribosomal proteins, e.g. L4, L17, and L20. It is important during the early stages of 50S assembly. It makes multiple contacts with different domains of the 23S rRNA in the assembled 50S subunit and ribosome. Functionally, the globular domain of the protein is located near the polypeptide exit tunnel on the outside of the subunit, while an extended beta-hairpin is found that lines the wall of the exit tunnel in the center of the 70S ribosome. In Borrelia garinii subsp. bavariensis (strain ATCC BAA-2496 / DSM 23469 / PBi) (Borreliella bavariensis), this protein is Large ribosomal subunit protein uL22.